We begin with the raw amino-acid sequence, 1066 residues long: Bifunctional cytochrome P450/NADPH--P450 reductase (1066 aa).

The cytochrome P450 stretch occupies residues 1-480; that stretch reads MAESVPIPEP…LAGNGATSSS (480 aa). Residue C407 coordinates heme. Residues 481 to 1066 form an NADPH-P-450 reductase region; it reads THNIKAAANL…NERFATDVFD (586 aa). Residues 500 to 641 form the Flavodoxin-like domain; it reads MAIFYGSNSG…DFEAWEDIVL (142 aa). FMN is bound by residues 506 to 511, 554 to 557, C588, and T596; these read SNSGTC and SYEG. An FAD-binding FR-type domain is found at 676-904; it reads QDVEEALVVA…RASSEAFHLP (229 aa).

In the N-terminal section; belongs to the cytochrome P450 family. FAD is required as a cofactor. FMN serves as cofactor. The cofactor is heme.

It localises to the membrane. It carries out the reaction an organic molecule + reduced [NADPH--hemoprotein reductase] + O2 = an alcohol + oxidized [NADPH--hemoprotein reductase] + H2O + H(+). It catalyses the reaction 2 oxidized [cytochrome P450] + NADPH = 2 reduced [cytochrome P450] + NADP(+) + H(+). Its activity is regulated as follows. Stimulated NADPH--cytochrome reductase activity in the presence of substrate. Inhibited by fatty acid substrates longer than 13 carbons and the degree of inhibition increases with increasing chain length. Functions as a fatty acid monooxygenase. Catalyzes hydroxylation of fatty acids at omega-1, omega-2 and omega-3 positions. Shows activity toward fatty acids with a chain length of 9-18 carbons with optimum chain lengths of 12-14 carbons (lauric, tridecylic and myristic acids). Can also use shorter saturated fatty acids with a chain length of 9 or 10 carbons as substrates. Also displays a NADPH-dependent reductase activity in the C-terminal domain, which allows electron transfer from NADPH to the heme iron of the cytochrome P450 N-terminal domain. The chain is Bifunctional cytochrome P450/NADPH--P450 reductase from Fusarium oxysporum (Fusarium vascular wilt).